The chain runs to 163 residues: 3-dehydroquinate dehydratase (163 aa).

Residue tyrosine 28 is the Proton acceptor of the active site. 3 residues coordinate substrate: asparagine 80, histidine 86, and aspartate 93. Histidine 106 functions as the Proton donor in the catalytic mechanism. Residues 107-108 (IS) and arginine 117 contribute to the substrate site.

Belongs to the type-II 3-dehydroquinase family. In terms of assembly, homododecamer.

The catalysed reaction is 3-dehydroquinate = 3-dehydroshikimate + H2O. Its pathway is metabolic intermediate biosynthesis; chorismate biosynthesis; chorismate from D-erythrose 4-phosphate and phosphoenolpyruvate: step 3/7. Its function is as follows. Catalyzes a trans-dehydration via an enolate intermediate. This is 3-dehydroquinate dehydratase from Bradyrhizobium sp. (strain BTAi1 / ATCC BAA-1182).